Here is a 359-residue protein sequence, read N- to C-terminus: Phosphoribosylformylglycinamidine cyclo-ligase (359 aa).

Belongs to the AIR synthase family.

The protein resides in the cytoplasm. It catalyses the reaction 2-formamido-N(1)-(5-O-phospho-beta-D-ribosyl)acetamidine + ATP = 5-amino-1-(5-phospho-beta-D-ribosyl)imidazole + ADP + phosphate + H(+). Its pathway is purine metabolism; IMP biosynthesis via de novo pathway; 5-amino-1-(5-phospho-D-ribosyl)imidazole from N(2)-formyl-N(1)-(5-phospho-D-ribosyl)glycinamide: step 2/2. This is Phosphoribosylformylglycinamidine cyclo-ligase from Brucella melitensis biotype 2 (strain ATCC 23457).